Here is a 214-residue protein sequence, read N- to C-terminus: Urease accessory protein UreG (214 aa).

Residues 1–20 (MSQLHAVPGRTKKLPPLRVG) form a disordered region. 23–30 (GPVGSGKT) provides a ligand contact to GTP.

This sequence belongs to the SIMIBI class G3E GTPase family. UreG subfamily. In terms of assembly, homodimer. UreD, UreF and UreG form a complex that acts as a GTP-hydrolysis-dependent molecular chaperone, activating the urease apoprotein by helping to assemble the nickel containing metallocenter of UreC. The UreE protein probably delivers the nickel.

It localises to the cytoplasm. Functionally, facilitates the functional incorporation of the urease nickel metallocenter. This process requires GTP hydrolysis, probably effectuated by UreG. The protein is Urease accessory protein UreG of Leptothrix cholodnii (strain ATCC 51168 / LMG 8142 / SP-6) (Leptothrix discophora (strain SP-6)).